The chain runs to 81 residues: Putative truncated GMC-type inactive oxidoreductase R833 (81 aa).

This sequence belongs to the GMC oxidoreductase family.

The polypeptide is Putative truncated GMC-type inactive oxidoreductase R833 (Acanthamoeba polyphaga mimivirus (APMV)).